The chain runs to 290 residues: S-methyl-5'-thioadenosine phosphorylase (290 aa).

Residues Ser-11, 53-54 (RH), and 86-87 (SA) each bind phosphate. Met-184 is a substrate binding site. Thr-185 serves as a coordination point for phosphate. 208 to 210 (DYD) is a binding site for substrate.

This sequence belongs to the PNP/MTAP phosphorylase family. MTAP subfamily. In terms of assembly, homohexamer. Dimer of a homotrimer.

The catalysed reaction is S-methyl-5'-thioadenosine + phosphate = 5-(methylsulfanyl)-alpha-D-ribose 1-phosphate + adenine. Its pathway is amino-acid biosynthesis; L-methionine biosynthesis via salvage pathway; S-methyl-5-thio-alpha-D-ribose 1-phosphate from S-methyl-5'-thioadenosine (phosphorylase route): step 1/1. Catalyzes the reversible phosphorylation of S-methyl-5'-thioadenosine (MTA) to adenine and 5-methylthioribose-1-phosphate. Involved in the breakdown of MTA, a major by-product of polyamine biosynthesis. Responsible for the first step in the methionine salvage pathway after MTA has been generated from S-adenosylmethionine. Has broad substrate specificity with 6-aminopurine nucleosides as preferred substrates. This chain is S-methyl-5'-thioadenosine phosphorylase, found in Cereibacter sphaeroides (strain ATCC 17023 / DSM 158 / JCM 6121 / CCUG 31486 / LMG 2827 / NBRC 12203 / NCIMB 8253 / ATH 2.4.1.) (Rhodobacter sphaeroides).